The chain runs to 50 residues: Insulin 2 (50 aa).

3 disulfide bridges follow: cysteine 8–cysteine 36, cysteine 20–cysteine 49, and cysteine 35–cysteine 40.

The protein belongs to the insulin family. In terms of assembly, heterodimer of a B chain and an A chain linked by two disulfide bonds.

The protein resides in the secreted. Its function is as follows. Insulin decreases blood glucose concentration. It increases cell permeability to monosaccharides, amino acids and fatty acids. It accelerates glycolysis, the pentose phosphate cycle, and glycogen synthesis in liver. The chain is Insulin 2 (ins2) from Batrachoididae sp. (Toadfish).